The sequence spans 533 residues: Putative sel1-like repeat-containing protein L21 (533 aa).

Sel1-like repeat units lie at residues 105–140 (VLSQNNLGFMYEEGIGTEIKINKAKMWYTLSANQGL), 141–172 (SFAQYNLGYYYYNKAKYEKSINYFQKSAQSGY), 173–206 (YLSNFMLAETYLKLSIPNFNEAIKNYLLAANQGC), 207–242 (NISQYRLGMIYFEGKYVNTDMNQAYKWFKLSAKQGN), and 243–278 (YFSQYGLGRVYYSMDSTKYNCQKAINCFIKSANCGH).

The protein is Putative sel1-like repeat-containing protein L21 of Acanthamoeba polyphaga mimivirus (APMV).